The primary structure comprises 103 residues: Co-chaperonin GroES (103 aa).

It belongs to the GroES chaperonin family. As to quaternary structure, heptamer of 7 subunits arranged in a ring. Interacts with the chaperonin GroEL.

It localises to the cytoplasm. Together with the chaperonin GroEL, plays an essential role in assisting protein folding. The GroEL-GroES system forms a nano-cage that allows encapsulation of the non-native substrate proteins and provides a physical environment optimized to promote and accelerate protein folding. GroES binds to the apical surface of the GroEL ring, thereby capping the opening of the GroEL channel. The chain is Co-chaperonin GroES from Synechococcus sp. (strain WH7803).